The sequence spans 75 residues: Small ribosomal subunit protein bS18 (75 aa).

The protein belongs to the bacterial ribosomal protein bS18 family. In terms of assembly, part of the 30S ribosomal subunit. Forms a tight heterodimer with protein bS6.

Binds as a heterodimer with protein bS6 to the central domain of the 16S rRNA, where it helps stabilize the platform of the 30S subunit. The sequence is that of Small ribosomal subunit protein bS18 from Idiomarina loihiensis (strain ATCC BAA-735 / DSM 15497 / L2-TR).